The sequence spans 162 residues: Crossover junction endodeoxyribonuclease RuvC (162 aa).

Residues Asp-8, Glu-69, and His-141 contribute to the active site. Residues Asp-8, Glu-69, and His-141 each contribute to the Mg(2+) site.

Belongs to the RuvC family. As to quaternary structure, homodimer which binds Holliday junction (HJ) DNA. The HJ becomes 2-fold symmetrical on binding to RuvC with unstacked arms; it has a different conformation from HJ DNA in complex with RuvA. In the full resolvosome a probable DNA-RuvA(4)-RuvB(12)-RuvC(2) complex forms which resolves the HJ. The cofactor is Mg(2+).

The protein localises to the cytoplasm. It catalyses the reaction Endonucleolytic cleavage at a junction such as a reciprocal single-stranded crossover between two homologous DNA duplexes (Holliday junction).. The RuvA-RuvB-RuvC complex processes Holliday junction (HJ) DNA during genetic recombination and DNA repair. Endonuclease that resolves HJ intermediates. Cleaves cruciform DNA by making single-stranded nicks across the HJ at symmetrical positions within the homologous arms, yielding a 5'-phosphate and a 3'-hydroxyl group; requires a central core of homology in the junction. The consensus cleavage sequence is 5'-(A/T)TT(C/G)-3'. Cleavage occurs on the 3'-side of the TT dinucleotide at the point of strand exchange. HJ branch migration catalyzed by RuvA-RuvB allows RuvC to scan DNA until it finds its consensus sequence, where it cleaves and resolves the cruciform DNA. The sequence is that of Crossover junction endodeoxyribonuclease RuvC from Wolbachia sp. subsp. Brugia malayi (strain TRS).